The chain runs to 360 residues: Phosphoserine aminotransferase (360 aa).

Residue R42 participates in L-glutamate binding. Pyridoxal 5'-phosphate is bound by residues 76–77 (AS), W102, T152, D171, and Q194. Residue K195 is modified to N6-(pyridoxal phosphate)lysine. 236–237 (NT) provides a ligand contact to pyridoxal 5'-phosphate.

This sequence belongs to the class-V pyridoxal-phosphate-dependent aminotransferase family. SerC subfamily. Homodimer. The cofactor is pyridoxal 5'-phosphate.

The protein resides in the cytoplasm. It catalyses the reaction O-phospho-L-serine + 2-oxoglutarate = 3-phosphooxypyruvate + L-glutamate. The enzyme catalyses 4-(phosphooxy)-L-threonine + 2-oxoglutarate = (R)-3-hydroxy-2-oxo-4-phosphooxybutanoate + L-glutamate. It participates in amino-acid biosynthesis; L-serine biosynthesis; L-serine from 3-phospho-D-glycerate: step 2/3. In terms of biological role, catalyzes the reversible conversion of 3-phosphohydroxypyruvate to phosphoserine and of 3-hydroxy-2-oxo-4-phosphonooxybutanoate to phosphohydroxythreonine. The chain is Phosphoserine aminotransferase from Geobacillus kaustophilus (strain HTA426).